The following is a 299-amino-acid chain: MYNLHREKIFMSYNQNKQYLEDNPEIQEKIELYGLNLLNEVISDNEEEIRADYNEANFLHPFWMNYPPLDRGKMPKGDQIPWIEVGEKAVGSKLTRLVSQREDITVREIGLPTGPDERYLLTSPTIYSLTNGFTDSIMMFVDIKSVGPRDSDYDLVLSPNQVSGNGDWAQLEGGIQNNQQTIQGPRSSQIFLPTIPPLYILSDGTIAPVVHLFIKPIYAMRSLTKGDTGQSLYKIKLASVPNGLGLFCNPGYAFDSAYKFLFRPGKDDRTKSLLQKRVRVDLRVLDKIGPRVMTIDMDK.

3 residues coordinate Mg(2+): aspartate 116, aspartate 142, and isoleucine 143.

As to quaternary structure, homodimer. It depends on Mg(2+) as a cofactor.

It carries out the reaction Endonucleolytic cleavage of DNA to give specific double-stranded fragments with terminal 5'-phosphates.. Its function is as follows. A P subtype restriction enzyme that recognizes the double-stranded sequence 5'-GCCNNNNNGGC-3' and cleaves before N-8. This chain is Type II restriction enzyme BglI (bglIR), found in Bacillus subtilis.